A 366-amino-acid polypeptide reads, in one-letter code: Nucleoporin SEH1 (366 aa).

6 WD repeats span residues 18-57 (AHRD…NWRR), 63-104 (CHGG…TEKD), 111-152 (QWIR…RIYE), 161-209 (RWNL…VIYE), 226-267 (DMPC…TAIL), and 290-329 (GDQR…QWVK).

The protein belongs to the WD repeat SEC13 family. As to quaternary structure, component of the nuclear pore complex (NPC). Probably part of the GATOR complex.

The protein localises to the nucleus. It localises to the nuclear pore complex. It is found in the lysosome membrane. Probable component of the nuclear pore complex (NPC) which is involved in the trafficking of macromolecules between the cytoplasm and nucleus. Functionally, as a component of the GATOR complex may function in the amino acid-sensing branch of the TORC1 signaling pathway. This chain is Nucleoporin SEH1, found in Caenorhabditis briggsae.